We begin with the raw amino-acid sequence, 691 residues long: Pentatricopeptide repeat-containing protein At5g27110 (691 aa).

16 PPR repeats span residues 38 to 68 (DVVLCKSLINVYFTCKDHCSARHVFENFDIR), 70 to 104 (DVYIWNSLMSGYSKNSMFHDTLEVFKRLLNCSICV), 106 to 140 (DSFTFPNVIKAYGALGREFLGRMIHTLVVKSGYVC), 141 to 171 (DVVVASSLVGMYAKFNLFENSLQVFDEMPER), 172 to 206 (DVASWNTVISCFYQSGEAEKALELFGRMESSGFEP), 207 to 241 (NSVSLTVAISACSRLLWLERGKEIHRKCVKKGFEL), 242 to 272 (DEYVNSALVDMYGKCDCLEVAREVFQKMPRK), 273 to 307 (SLVAWNSMIKGYVAKGDSKSCVEILNRMIIEGTRP), 308 to 342 (SQTTLTSILMACSRSRNLLHGKFIHGYVIRSVVNA), 343 to 373 (DIYVNCSLIDLYFKCGEANLAETVFSKTQKD), 374 to 408 (VAESWNVMISSYISVGNWFKAVEVYDQMVSVGVKP), 409 to 443 (DVVTFTSVLPACSQLAALEKGKQIHLSISESRLET), 444 to 474 (DELLLSALLDMYSKCGNEKEAFRIFNSIPKK), 475 to 509 (DVVSWTVMISAYGSHGQPREALYQFDEMQKFGLKP), 510 to 540 (DGVTLLAVLSACGHAGLIDEGLKFFSQMRSK), and 546 to 576 (IIEHYSCMIDILGRAGRLLEAYEIIQQTPET). The type E motif stretch occupies residues 582 to 657 (LLSTLFSACC…KPGCSWIEMS (76 aa)). The type E(+) motif stretch occupies residues 658 to 688 (DKVCHFFAEDRSHLRAENVYECLALLSGHME).

It belongs to the PPR family. PCMP-E subfamily.

The sequence is that of Pentatricopeptide repeat-containing protein At5g27110 (PCMP-E14) from Arabidopsis thaliana (Mouse-ear cress).